The sequence spans 182 residues: Guanylate kinase (182 aa).

Residues 2–180 form the Guanylate kinase-like domain; sequence GTLTVITGPS…ALLKLEGLMG (179 aa). Residue 9–16 coordinates ATP; the sequence is GPSGVGKG.

Belongs to the guanylate kinase family.

The protein resides in the cytoplasm. The enzyme catalyses GMP + ATP = GDP + ADP. The catalysed reaction is dZMP + ATP = dZDP + ADP. Its pathway is purine metabolism. Functionally, essential for recycling GMP and indirectly, cGMP. (Microbial infection) Catalyzes the phosphorylation of dZMP to dZDP, when the bacterium is infected by a phage that produces the substrate for the synthesis of dZTP (2- amino-2'-deoxyadenosine 5'-triphosphate), which is then used by the phage as a DNA polymerase substrate. In Parasynechococcus marenigrum (strain WH8102), this protein is Guanylate kinase.